Reading from the N-terminus, the 231-residue chain is Superoxide dismutase [Mn] 1, mitochondrial (231 aa).

The transit peptide at methionine 1–glutamine 29 directs the protein to the mitochondrion. Mn(2+)-binding residues include histidine 55 and histidine 103. Serine 124 is subject to Phosphoserine. Residues aspartate 192 and histidine 196 each coordinate Mn(2+).

This sequence belongs to the iron/manganese superoxide dismutase family. As to quaternary structure, homotetramer. Mn(2+) serves as cofactor.

It localises to the mitochondrion matrix. The enzyme catalyses 2 superoxide + 2 H(+) = H2O2 + O2. With respect to regulation, activated by MTM1. In terms of biological role, destroys superoxide anion radicals which are normally produced within the cells and which are toxic to biological systems. In Arabidopsis thaliana (Mouse-ear cress), this protein is Superoxide dismutase [Mn] 1, mitochondrial (MSD1).